Here is a 408-residue protein sequence, read N- to C-terminus: Probable medium-chain specific acyl-CoA dehydrogenase 2, mitochondrial (408 aa).

The N-terminal 5 residues, 1-5 (MLSRL), are a transit peptide targeting the mitochondrion. FAD-binding positions include 143 to 152 (YCVTEPGAGS) and 176 to 178 (WIT). Residue Ser-152 participates in substrate binding. Residue 263 to 266 (DMTR) participates in substrate binding. Residues 291–293 (RKA), 301–302 (HQ), and 355–359 (MLFRC) contribute to the FAD site. Glu-382 acts as the Proton acceptor in catalysis. Gly-383 serves as a coordination point for substrate. 384–386 (TSQ) lines the FAD pocket. A substrate-binding site is contributed by Arg-394.

It belongs to the acyl-CoA dehydrogenase family. In terms of assembly, homotetramer. FAD serves as cofactor.

Its subcellular location is the mitochondrion matrix. The enzyme catalyses a medium-chain 2,3-saturated fatty acyl-CoA + oxidized [electron-transfer flavoprotein] + H(+) = a medium-chain (2E)-enoyl-CoA + reduced [electron-transfer flavoprotein]. The protein operates within lipid metabolism; mitochondrial fatty acid beta-oxidation. In terms of biological role, this enzyme is specific for acyl chain lengths of 4 to 16. The sequence is that of Probable medium-chain specific acyl-CoA dehydrogenase 2, mitochondrial from Caenorhabditis briggsae.